The chain runs to 33 residues: Cytochrome b6-f complex subunit 7 (33 aa).

Residues 9 to 29 traverse the membrane as a helical segment; the sequence is AVICFTLTLIGLSLGFVLLKI.

This sequence belongs to the PetM family. As to quaternary structure, the 4 large subunits of the cytochrome b6-f complex are cytochrome b6, subunit IV (17 kDa polypeptide, PetD), cytochrome f and the Rieske protein, while the 4 small subunits are PetG, PetL, PetM and PetN. The complex functions as a dimer.

It localises to the plastid. It is found in the cyanelle thylakoid membrane. Its function is as follows. Component of the cytochrome b6-f complex, which mediates electron transfer between photosystem II (PSII) and photosystem I (PSI), cyclic electron flow around PSI, and state transitions. The sequence is that of Cytochrome b6-f complex subunit 7 from Cyanophora paradoxa.